Here is a 73-residue protein sequence, read N- to C-terminus: Large ribosomal subunit protein bL31 (73 aa).

Residues 34 to 43 show a composition bias toward basic and acidic residues; it reads KMNLDIDPKS. The interval 34–54 is disordered; that stretch reads KMNLDIDPKSHPAWTGGTQQM.

Belongs to the bacterial ribosomal protein bL31 family. Type A subfamily. In terms of assembly, part of the 50S ribosomal subunit.

Binds the 23S rRNA. This is Large ribosomal subunit protein bL31 from Rhodopseudomonas palustris (strain BisA53).